We begin with the raw amino-acid sequence, 185 residues long: NOP protein chaperone 1 (185 aa).

3 positions are modified to phosphoserine: S34, S66, and S177. Residues 121–185 (SRSDSKEEDS…DSPASKKKKQ (65 aa)) are disordered.

In terms of assembly, interacts with NOP58, RUVBL1 and RUVBL2; the interactions are direct and NOPCHAP1 bridges the association of NOP58 with RUVBL1:RUVBL2 even in absence of snoRNAs. The interactions with RUVBL1 and RUVBL2 are disrupted upon ATP binding.

It is found in the nucleus. Client-loading PAQosome/R2TP complex cofactor that selects NOP58 to promote box C/D small nucleolar ribonucleoprotein (snoRNP) assembly. Acts as a bridge between NOP58 and the R2TP complex via RUVBL1:RUVBL2. The polypeptide is NOP protein chaperone 1 (Mus musculus (Mouse)).